The sequence spans 205 residues: Ribonuclease HII (205 aa).

One can recognise an RNase H type-2 domain in the interval 16-205; sequence VSEVGIDEVG…KSFLKKSNLF (190 aa). Residues Asp-22, Glu-23, and Asp-118 each contribute to the a divalent metal cation site.

It belongs to the RNase HII family. It depends on Mn(2+) as a cofactor. Mg(2+) is required as a cofactor.

The protein resides in the cytoplasm. It catalyses the reaction Endonucleolytic cleavage to 5'-phosphomonoester.. Its function is as follows. Endonuclease that specifically degrades the RNA of RNA-DNA hybrids. The protein is Ribonuclease HII of Prochlorococcus marinus (strain MIT 9215).